Reading from the N-terminus, the 438-residue chain is UPF0229 protein R01398 (438 aa).

Positions 55–107 (PARGVNEPAFQPDSNSGERRHVLPGNREFAAGDRIPKRGSGGGAGNAGAGTGQ) are disordered. Gly residues predominate over residues 93–105 (GSGGGAGNAGAGT).

The protein belongs to the UPF0229 family.

The sequence is that of UPF0229 protein R01398 from Rhizobium meliloti (strain 1021) (Ensifer meliloti).